The following is a 427-amino-acid chain: 3-phosphoshikimate 1-carboxyvinyltransferase (427 aa).

3-phosphoshikimate-binding residues include Lys20, Ser21, and Arg25. Lys20 is a binding site for phosphoenolpyruvate. Residues Gly92 and Arg120 each contribute to the phosphoenolpyruvate site. 3-phosphoshikimate is bound by residues Ser166, Gln168, Asp312, and Lys339. Residue Gln168 coordinates phosphoenolpyruvate. Asp312 functions as the Proton acceptor in the catalytic mechanism. 2 residues coordinate phosphoenolpyruvate: Arg343 and Arg385.

Belongs to the EPSP synthase family. Monomer.

It is found in the cytoplasm. The enzyme catalyses 3-phosphoshikimate + phosphoenolpyruvate = 5-O-(1-carboxyvinyl)-3-phosphoshikimate + phosphate. Its pathway is metabolic intermediate biosynthesis; chorismate biosynthesis; chorismate from D-erythrose 4-phosphate and phosphoenolpyruvate: step 6/7. Functionally, catalyzes the transfer of the enolpyruvyl moiety of phosphoenolpyruvate (PEP) to the 5-hydroxyl of shikimate-3-phosphate (S3P) to produce enolpyruvyl shikimate-3-phosphate and inorganic phosphate. In Streptococcus sanguinis (strain SK36), this protein is 3-phosphoshikimate 1-carboxyvinyltransferase.